A 578-amino-acid polypeptide reads, in one-letter code: Proline--tRNA ligase (578 aa).

Belongs to the class-II aminoacyl-tRNA synthetase family. ProS type 1 subfamily. In terms of assembly, homodimer.

It localises to the cytoplasm. The enzyme catalyses tRNA(Pro) + L-proline + ATP = L-prolyl-tRNA(Pro) + AMP + diphosphate. Functionally, catalyzes the attachment of proline to tRNA(Pro) in a two-step reaction: proline is first activated by ATP to form Pro-AMP and then transferred to the acceptor end of tRNA(Pro). As ProRS can inadvertently accommodate and process non-cognate amino acids such as alanine and cysteine, to avoid such errors it has two additional distinct editing activities against alanine. One activity is designated as 'pretransfer' editing and involves the tRNA(Pro)-independent hydrolysis of activated Ala-AMP. The other activity is designated 'posttransfer' editing and involves deacylation of mischarged Ala-tRNA(Pro). The misacylated Cys-tRNA(Pro) is not edited by ProRS. This Burkholderia mallei (strain ATCC 23344) protein is Proline--tRNA ligase.